Here is a 581-residue protein sequence, read N- to C-terminus: Moesin/ezrin/radixin homolog 1 (581 aa).

One can recognise an FERM domain in the interval 8-298; that stretch reads MNVRVTTMDA…GNHELYMRRR (291 aa). The disordered stretch occupies residues 452 to 519; it reads QVAKGSRAAA…EERRTLAERN (68 aa). Residues 459–469 show a composition bias toward low complexity; it reads AAAALQAATTT. Residues 477-486 are compositionally biased toward acidic residues; it reads EEEENEEELI. The segment covering 495–519 has biased composition (basic and acidic residues); the sequence is FSKDFDTDEHIKDPVEERRTLAERN. Threonine 562 carries the phosphothreonine modification.

In terms of assembly, interacts with cytoskeletal actin.

Its subcellular location is the cell junction. The protein localises to the adherens junction. It is found in the cell projection. The protein resides in the microvillus. It localises to the rhabdomere. Its subcellular location is the cell membrane. The protein localises to the cytoplasm. It is found in the cytoskeleton. Involved in connections of major cytoskeletal structures to the plasma membrane. The protein is Moesin/ezrin/radixin homolog 1 of Anopheles gambiae (African malaria mosquito).